Reading from the N-terminus, the 226-residue chain is Staphylococcal superantigen-like 1 (226 aa).

The N-terminal stretch at 1–30 (MKFKAIAKASLALGMLATGVITSNVQSVQA) is a signal peptide.

This sequence belongs to the staphylococcal/streptococcal toxin family. In terms of assembly, homodimer.

It localises to the secreted. In terms of biological role, mediates virulence by proteolytically cleaving host proteins, including collagens types I and IV as well as human cytokines IL8, IL17A, and IFN-gamma. The protein is Staphylococcal superantigen-like 1 of Staphylococcus aureus (strain NCTC 8325 / PS 47).